The chain runs to 232 residues: 7-cyano-7-deazaguanine synthase (232 aa).

ATP is bound at residue 8 to 18 (FSGGQDSTTCL). Residues cysteine 187, cysteine 196, cysteine 199, and cysteine 202 each contribute to the Zn(2+) site.

This sequence belongs to the QueC family. It depends on Zn(2+) as a cofactor.

The catalysed reaction is 7-carboxy-7-deazaguanine + NH4(+) + ATP = 7-cyano-7-deazaguanine + ADP + phosphate + H2O + H(+). It participates in purine metabolism; 7-cyano-7-deazaguanine biosynthesis. Catalyzes the ATP-dependent conversion of 7-carboxy-7-deazaguanine (CDG) to 7-cyano-7-deazaguanine (preQ(0)). In Vibrio vulnificus (strain YJ016), this protein is 7-cyano-7-deazaguanine synthase.